Consider the following 200-residue polypeptide: RNA-binding protein with multiple splicing 2 (200 aa).

The 78-residue stretch at 22–99 (RTLFVSGLPV…QTLRLEFAKA (78 aa)) folds into the RRM domain. The tract at residues 32–42 (DIKPRELYLLF) is important for homodimerization.

Homodimer. As to expression, expressed in developing heart.

The protein localises to the cytoplasm. Its subcellular location is the nucleus. It is found in the stress granule. In terms of biological role, RNA-binding protein involved in the regulation of smooth muscle cell differentiation and proliferation in the gastrointestinal system. Binds NOG mRNA, the major inhibitor of the bone morphogenetic protein (BMP) pathway. Mediates an increase of NOG mRNA levels, thereby contributing to the negative regulation of BMP signaling pathway and promoting reversible dedifferentiation and proliferation of smooth muscle cells. Acts as a pre-mRNA alternative splicing regulator. Mediates ACTN1 and FLNB alternative splicing. Likely binds to mRNA tandem CAC trinucleotide or CA dinucleotide motifs. The sequence is that of RNA-binding protein with multiple splicing 2 from Gallus gallus (Chicken).